A 238-amino-acid polypeptide reads, in one-letter code: Splicing regulator RBM11 (238 aa).

An RRM domain is found at 10–87 (RTVFVGNLEA…RPINVQYRFG (78 aa)). The interval 172–238 (ALNHSPGPEA…CRKCKKKKRY (67 aa)) is disordered. The Bipartite nuclear localization signal motif lies at 202–237 (NKRKRQRPDSDSDSSSEDKRGNEGSQKCRKCKKKKR). Over residues 228–238 (KCRKCKKKKRY) the composition is skewed to basic residues.

As to quaternary structure, homodimer. Selectively expressed in brain, cerebellum and testis, and to a lower extent in kidney.

Its subcellular location is the nucleus. It localises to the nucleoplasm. The protein resides in the nucleus speckle. Its function is as follows. Tissue-specific splicing factor with potential implication in the regulation of alternative splicing during neuron and germ cell differentiation. Antagonizes SRSF1-mediated BCL-X splicing. May affect the choice of alternative 5' splice sites by binding to specific sequences in exons and antagonizing the SR protein SRSF1. The protein is Splicing regulator RBM11 (Rbm11) of Mus musculus (Mouse).